The following is an 860-amino-acid chain: Leucine--tRNA ligase (860 aa).

The 'HIGH' region motif lies at Pro42–His52. Positions Lys619–Ser623 match the 'KMSKS' region motif. An ATP-binding site is contributed by Lys622.

Belongs to the class-I aminoacyl-tRNA synthetase family.

The protein localises to the cytoplasm. The catalysed reaction is tRNA(Leu) + L-leucine + ATP = L-leucyl-tRNA(Leu) + AMP + diphosphate. The protein is Leucine--tRNA ligase of Escherichia coli (strain 55989 / EAEC).